We begin with the raw amino-acid sequence, 505 residues long: Maturase K (505 aa).

The protein belongs to the intron maturase 2 family. MatK subfamily.

The protein localises to the plastid. It localises to the chloroplast. In terms of biological role, usually encoded in the trnK tRNA gene intron. Probably assists in splicing its own and other chloroplast group II introns. This Silene otites (Spanish catchfly) protein is Maturase K.